The following is a 788-amino-acid chain: Integrin beta-6 (788 aa).

An N-terminal signal peptide occupies residues 1–21; it reads MGIELLCLFFLFLGRNDHVQG. The 50-residue stretch at 22 to 71 folds into the PSI domain; it reads GCALGGAETCEDCLLIGPQCAWCSQENFTYLSGVGERCDTPANLLAKGCQ. Topologically, residues 22 to 709 are extracellular; it reads GCALGGAETC…KDCPKPPNSP (688 aa). 28 disulfides stabilise this stretch: cysteine 23–cysteine 41, cysteine 31–cysteine 454, cysteine 34–cysteine 59, cysteine 44–cysteine 70, cysteine 197–cysteine 204, cysteine 252–cysteine 293, cysteine 394–cysteine 406, cysteine 426–cysteine 452, cysteine 456–cysteine 476, cysteine 467–cysteine 479, cysteine 481–cysteine 490, cysteine 492–cysteine 519, cysteine 502–cysteine 517, cysteine 511–cysteine 522, cysteine 524–cysteine 537, cysteine 539–cysteine 560, cysteine 544–cysteine 558, cysteine 552–cysteine 563, cysteine 565–cysteine 574, cysteine 576–cysteine 599, cysteine 583–cysteine 597, cysteine 591–cysteine 602, cysteine 604–cysteine 614, cysteine 617–cysteine 620, cysteine 624–cysteine 670, cysteine 630–cysteine 649, cysteine 633–cysteine 645, and cysteine 678–cysteine 702. N-linked (GlcNAc...) asparagine glycans are attached at residues asparagine 48 and asparagine 97. Residues 131-371 enclose the VWFA domain; it reads YPVDLYYLMD…QLIISAYEEL (241 aa). The Mg(2+) site is built by aspartate 140, serine 142, and serine 144. Residues serine 144, aspartate 147, aspartate 148, and glutamate 179 each contribute to the Ca(2+) site. 4 residues coordinate Ca(2+): asparagine 235, aspartate 237, proline 239, and glutamate 240. Glutamate 240 is a Mg(2+) binding site. N-linked (GlcNAc...) asparagine glycosylation is present at asparagine 260. Residues aspartate 271 and lysine 355 each coordinate Ca(2+). N-linked (GlcNAc...) asparagine glycosylation is present at asparagine 387. N-linked (GlcNAc...) asparagine glycosylation occurs at asparagine 418. I-EGF domains lie at 456 to 491, 492 to 538, 539 to 575, and 576 to 615; these read CQKE…PHCE, CGED…PYCQ, CDDF…EYCN, and CTTS…LTCE. Asparagine 463 and asparagine 471 each carry an N-linked (GlcNAc...) asparagine glycan. A helical membrane pass occupies residues 710 to 730; the sequence is MIMLGVSLAILLIGVVLLCIW. The interval 731–758 is interaction with HAX1; that stretch reads KLLVSFHDRKEVAKFEAERSKAKWQTGT. Residues 731–788 lie on the Cytoplasmic side of the membrane; it reads KLLVSFHDRKEVAKFEAERSKAKWQTGTNPLYRGSTSTFKNVTYKHREKQKVDLSMDG.

Belongs to the integrin beta chain family. Heterodimer of an alpha and a beta subunit. Interacts with FLNB. Interacts with HAX1. ITGAV:ITGB6 interacts with FBN1. ITGAV:ITGB6 interacts with TGFB1.

It localises to the cell membrane. The protein localises to the cell junction. The protein resides in the focal adhesion. In terms of biological role, integrin alpha-V:beta-6 (ITGAV:ITGB6) is a receptor for fibronectin and cytotactin. It recognizes the sequence R-G-D in its ligands. ITGAV:ITGB6 acts as a receptor for fibrillin-1 (FBN1) and mediates R-G-D-dependent cell adhesion to FBN1. Integrin alpha-V:beta-6 (ITGAV:ITGB6) mediates R-G-D-dependent release of transforming growth factor beta-1 (TGF-beta-1) from regulatory Latency-associated peptide (LAP), thereby playing a key role in TGF-beta-1 activation. The chain is Integrin beta-6 (ITGB6) from Sus scrofa (Pig).